The sequence spans 1090 residues: Neurofilament heavy polypeptide (1090 aa).

The interval 2 to 98 is head; that stretch reads MSFGSADALL…AVAARSEKEQ (97 aa). Residues Ser-74 and Ser-122 each carry the phosphoserine modification. An IF rod domain is found at 95–411; it reads EKEQLQALND…KLLEGEECRI (317 aa). A coil 1A region spans residues 99 to 130; the sequence is LQALNDRFAGYIDKVRQLEAHNRSLEGEAAAL. The interval 131–143 is linker 1; it reads RQQQAGRAAMGEL. Residues 144 to 242 form a coil 1B region; the sequence is YEREVREMRG…QEEVGELLGQ (99 aa). A linker 12 region spans residues 243-264; sequence IQGCGAAQAQAQAEARDALKCD. The tract at residues 265 to 286 is coil 2A; that stretch reads VTSALREIRAQLEGHAVQSTLQ. Residues 287–290 form a linker 2 region; that stretch reads SEEW. The interval 291–411 is coil 2B; that stretch reads FRVRLDRLSE…KLLEGEECRI (121 aa). A phosphoserine mark is found at Ser-345, Ser-416, and Ser-419. The tail stretch occupies residues 412–1090; the sequence is GFGPSPFSLT…TEDKATKGEK (679 aa). Residues 456 to 1090 form a disordered region; it reads EGQTEEIRVT…TEDKATKGEK (635 aa). Residues 468–495 are compositionally biased toward acidic residues; that stretch reads VTEEEDKEAQGQEGEEAEEGEEKEEEEG. A compositionally biased stretch (low complexity) spans 496–506; it reads AAATSPPAEEA. Phosphoserine occurs at positions 508, 523, 529, 535, 541, 547, 553, 559, 565, 571, 577, 583, 589, 595, 601, 607, 613, 619, 625, 631, 637, 643, 649, 655, 661, 667, 673, 679, 685, 691, 697, 703, 709, 715, 721, 727, 733, 739, 745, 751, 757, 763, and 769. The span at 508-579 shows a compositional bias: basic and acidic residues; it reads SPEKETKSRV…KSPAEAKSPA (72 aa). Tandem repeats lie at residues 522-527, 528-533, 534-539, 540-545, 546-551, 552-557, 558-563, 564-569, 570-575, 576-581, 582-587, 588-593, 594-599, 600-605, 606-611, 612-617, 618-623, 624-629, 630-635, 636-641, 642-647, 648-653, 654-659, 660-665, 666-671, 672-677, 678-683, 684-689, 690-695, 696-701, 702-707, 708-713, 714-719, 720-725, 726-731, 732-737, 738-743, 744-749, 750-755, 756-761, 762-767, and 768-773. The interval 522–892 is 52 X 6 AA approximate tandem repeats of K-S-P-[AGISV]-[EATK]-[APVQ]; sequence KSPGEAKSPG…KEEVKSPVKE (371 aa). The span at 595–633 shows a compositional bias: basic and acidic residues; it reads SPSEAKSPAEAKSPAEAKSPAEAKSPAEAKSPAEAKSPA. Basic and acidic residues predominate over residues 649–717; that stretch reads SPSEAKSPAE…KSPAEVKSPG (69 aa). Positions 745 to 781 are enriched in basic and acidic residues; it reads SPGEAKSPAEAKSPAEAKSPIEVKSPEKAKTPVKEGA. One copy of the 43; approximate repeat lies at 774 to 779; the sequence is KTPVKE. 6 repeat units span residues 782–787, 788–793, 794–799, 808–813, 814–819, and 833–838. Phosphoserine is present on residues Ser-783, Ser-789, Ser-795, Ser-809, Ser-815, and Ser-834. Basic and acidic residues predominate over residues 788-834; that stretch reads KSPEKAKSPVKEDIKPPAEAKSPEKAKSPVKEGAKPPEKAKPLDVKS. Thr-839 carries the post-translational modification Phosphothreonine. Composition is skewed to basic and acidic residues over residues 843–964 and 974–1090; these read EEAK…KAVA and GVKE…KGEK. Tandem repeats lie at residues 858–863, 866–871, and 887–892. Residues Ser-859, Ser-867, Ser-888, and Ser-947 each carry the phosphoserine modification.

This sequence belongs to the intermediate filament family. Forms heterodimers with NEFL; which can further hetero-oligomerize (in vitro). Forms heterodimers with INA (in vitro). In terms of processing, there are a number of repeats of the tripeptide K-S-P, NFH is phosphorylated on a number of the serines in this motif. It is thought that phosphorylation of NFH results in the formation of interfilament cross bridges that are important in the maintenance of axonal caliber. Phosphorylation seems to play a major role in the functioning of the larger neurofilament polypeptides (NF-M and NF-H), the levels of phosphorylation being altered developmentally and coincidentally with a change in the neurofilament function. Post-translationally, phosphorylated in the head and rod regions by the PKC kinase PKN1, leading to the inhibition of polymerization. As to expression, expressed in the sciatic nerve (at protein level).

The protein resides in the cytoplasm. The protein localises to the cytoskeleton. Its subcellular location is the cell projection. It localises to the axon. Its function is as follows. Neurofilaments usually contain three intermediate filament proteins: NEFL, NEFM, and NEFH which are involved in the maintenance of neuronal caliber. NEFH has an important function in mature axons that is not subserved by the two smaller NF proteins. May additionally cooperate with the neuronal intermediate filament proteins PRPH and INA to form neuronal filamentous networks. In Mus musculus (Mouse), this protein is Neurofilament heavy polypeptide (Nefh).